A 113-amino-acid chain; its full sequence is U10-theraphotoxin-Hs2a (113 aa).

A signal peptide spans 1–21 (MNTVRVTFLLVFVLAVSLGQA). A propeptide spanning residues 22–67 (DEDGNRMEKRQKKTEAENLLLPKLEELDAKLWEEDSVESRNSRQKR) is cleaved from the precursor. 3 cysteine pairs are disulfide-bonded: cysteine 68–cysteine 86, cysteine 75–cysteine 91, and cysteine 85–cysteine 106.

Belongs to the neurotoxin 14 (magi-1) family. 02 (HWTX-XVIc) subfamily. As to expression, expressed by the venom gland.

The protein resides in the secreted. Its function is as follows. Probable ion channel inhibitor. The chain is U10-theraphotoxin-Hs2a from Cyriopagopus schmidti (Chinese bird spider).